The primary structure comprises 163 residues: Retinoic acid receptor responder protein 2 (163 aa).

The signal sequence occupies residues 1–20 (MRRLLIPLALWLGAVGVGVA). Cystine bridges form between cysteine 77–cysteine 87, cysteine 98–cysteine 117, and cysteine 101–cysteine 135. A propeptide spanning residues 158-163 (KALPRS) is cleaved from the precursor.

In terms of processing, secreted in an inactive precursor form, prochemerin, which is proteolytically processed by a variety of extracellular proteases to generate forms with differing levels of bioactivity. For example, the removal of six amino acids results in chemerin-157, which exhibits the highest activity, while removal of seven amino acids results in chemerin-156 which has slightly less activity. Some proteases are able to cleave at more than one site and chemerin forms may be sequentially processed by different enzymes to modulate activity levels. The coordinated expression and activity of chemerin-modifying enzymes is essential for regulating its bioactivation, inactivation and, consequently, biological function. Cathepsin G cleaves seven C-terminal amino acids from prochemerin (chemerin-156), elastase is able to cleave six (chemerin-157), eight (chemerin-155) or eleven (chemerin-152), plasmin cleaves five amino acids (chemerin-158), and tryptase cleaves five (chemerin-158) or eight (chemerin-155). Multiple cleavages might be required to fully activate chemerin, with an initial tryptase cleavage resulting in chemerin with low activity (chemerin-158), and a second cleavage by carboxypeptidase N or B producing highly active chemerin (chemerin-157). In terms of tissue distribution, expressed at the highest levels in placenta, liver, and white adipose tissue (WAT), and to a lesser extent in many other tissues such as lung, brown adipose tissue, heart, ovary, kidney, skeletal muscle and pancreas. Within WAT, expression is enriched in adipocytes as compared to the stromal vascular fraction. Expression and secretion increases dramatically with adipogenesis. Highly expressed in skin (basal and suprabasal layers of the epidermis, hair follicles and endothelial cells). Expression is elevated in numerous metabolic and inflammatory diseases including psoriasis, obesity, type 2 diabetes, metabolic syndrome and cardiovascular disease.

It is found in the secreted. Its function is as follows. Adipocyte-secreted protein (adipokine) that regulates adipogenesis, metabolism and inflammation through activation of the chemokine-like receptor 1 (CMKLR1). Also acts as a ligand for CMKLR2. Can also bind to C-C chemokine receptor-like 2 (CCRL2), but with a lower affinity than it does to CMKLR1 or CMKLR2. Positively regulates adipocyte differentiation, modulates the expression of adipocyte genes involved in lipid and glucose metabolism and might play a role in angiogenesis, a process essential for the expansion of white adipose tissue. Also acts as a pro-inflammatory adipokine, causing an increase in secretion of pro-inflammatory and prodiabetic adipokines, which further impair adipose tissue metabolic function and have negative systemic effects including impaired insulin sensitivity, altered glucose and lipid metabolism, and a decrease in vascular function in other tissues. Can have both pro- and anti-inflammatory properties depending on the modality of enzymatic cleavage by different classes of proteases. Acts as a chemotactic factor for leukocyte populations expressing CMKLR1, particularly immature plasmacytoid dendritic cells, but also immature myeloid DCs, macrophages and natural killer cells. Exerts an anti-inflammatory role by preventing TNF/TNFA-induced VCAM1 expression and monocytes adhesion in vascular endothelial cells. The effect is mediated via inhibiting activation of NF-kappa-B and CRK/p38 through stimulation of AKT1/NOS3 signaling and nitric oxide production. Its dual role in inflammation and metabolism might provide a link between chronic inflammation and obesity, as well as obesity-related disorders such as type 2 diabetes and cardiovascular disease. Exhibits an antimicrobial function in the skin. The sequence is that of Retinoic acid receptor responder protein 2 (RARRES2) from Homo sapiens (Human).